A 650-amino-acid polypeptide reads, in one-letter code: SPARC-like protein 1 (650 aa).

The signal sequence occupies residues 1-16 (MKAVLLLLCALGTAVA). The interval 51–352 (TADIENHPSD…HGAGDDYFIP (302 aa)) is disordered. A compositionally biased stretch (basic and acidic residues) spans 54–64 (IENHPSDKAEK). Residues Ser-70, Ser-78, and Ser-86 each carry the phosphoserine modification. Positions 75 to 85 (HEQSTEQDKTY) are enriched in basic and acidic residues. A compositionally biased stretch (acidic residues) spans 91–101 (LKDEEDGDGDL). Composition is skewed to polar residues over residues 116-126 (EGTSEPQQKSL) and 135-148 (TVST…QRAN). A glycan (N-linked (GlcNAc...) asparagine) is linked at Asn-148. Ser-155 and Ser-163 each carry phosphoserine. Over residues 157–174 (EQPVSDSHQQPNESSKQT) the composition is skewed to polar residues. Asn-168 is a glycosylation site (N-linked (GlcNAc...) asparagine). Over residues 189-210 (IPNEEEEEEEDEEEEEEEEPED) the composition is skewed to acidic residues. Ser-272 carries the phosphoserine modification. Residues 277–299 (EDKAAGSKEHIPHTEQQDQEGKA) show a composition bias toward basic and acidic residues. Ser-353 is modified (phosphoserine). Positions 375–415 (EETTTGESENRREAADNQEAKKAESSPNAEPSDEGNSREHS) are disordered. Basic and acidic residues predominate over residues 382-398 (SENRREAADNQEAKKAE). A Phosphoserine modification is found at Ser-406. The Follistatin-like domain maps to 418 to 440 (SCTNFQCKRGHICKTDPQGKPHC). 7 disulfide bridges follow: Cys-419–Cys-430, Cys-424–Cys-440, Cys-442–Cys-476, Cys-448–Cys-469, Cys-458–Cys-495, Cys-501–Cys-612, and Cys-620–Cys-636. In terms of domain architecture, Kazal-like spans 436–497 (GKPHCVCQDP…QLDYFGACKS (62 aa)). Asn-462 is a glycosylation site (N-linked (GlcNAc...) asparagine). In terms of domain architecture, EF-hand spans 608-643 (PMEHCITRFFEECDPNKDKHITLKEWGHCFGIKEED). The Ca(2+) site is built by Asp-621, Asn-623, Asp-625, His-627, and Glu-632.

Belongs to the SPARC family. In terms of tissue distribution, highest expression in brain. Moderate levels in heart, adrenal gland, epididymis and lung. Low levels in kidney, eye, liver, spleen, submandibular gland and testis.

The protein resides in the secreted. The protein localises to the extracellular space. Its subcellular location is the extracellular matrix. This Mus musculus (Mouse) protein is SPARC-like protein 1 (Sparcl1).